A 188-amino-acid chain; its full sequence is UPF0301 protein XAC2918 (188 aa).

The protein belongs to the UPF0301 (AlgH) family.

In Xanthomonas axonopodis pv. citri (strain 306), this protein is UPF0301 protein XAC2918.